The following is a 264-amino-acid chain: Protein-lysine methyltransferase METTL21C (264 aa).

The segment covering 1–10 (MDVCLSSAQQ) has biased composition (polar residues). Residues 1 to 46 (MDVCLSSAQQPGRRGEGLSSPGGWLEAEKKGAPQKDSTGGVLEESN) form a disordered region. Residues Trp92, 120–122 (GAG), Asp141, Trp172, and Ser193 contribute to the S-adenosyl-L-methionine site.

This sequence belongs to the methyltransferase superfamily. METTL21 family. Interacts with members of the heat shock protein 70 families; these proteins may possibly be methylation substrates for the enzyme.

It is found in the nucleus. The protein resides in the cytoplasm. It carries out the reaction L-lysyl-[protein] + S-adenosyl-L-methionine = N(6)-methyl-L-lysyl-[protein] + S-adenosyl-L-homocysteine + H(+). It catalyses the reaction N(6)-methyl-L-lysyl-[protein] + S-adenosyl-L-methionine = N(6),N(6)-dimethyl-L-lysyl-[protein] + S-adenosyl-L-homocysteine + H(+). The enzyme catalyses N(6),N(6)-dimethyl-L-lysyl-[protein] + S-adenosyl-L-methionine = N(6),N(6),N(6)-trimethyl-L-lysyl-[protein] + S-adenosyl-L-homocysteine + H(+). In terms of biological role, protein-lysine N-methyltransferase using S-adenosyl-L-methionine as methyl donor. Mono-di and trimethylates 'Lys-943' of AARS1. This is Protein-lysine methyltransferase METTL21C from Homo sapiens (Human).